Here is a 364-residue protein sequence, read N- to C-terminus: Fructose-bisphosphate aldolase B (364 aa).

N-acetylalanine is present on Ala-2. The residue at position 13 (Lys-13) is an N6-succinyllysine. The residue at position 36 (Ser-36) is a Phosphoserine. Thr-39 carries the post-translational modification Phosphothreonine. Beta-D-fructose 1,6-bisphosphate is bound at residue Arg-43. Position 89 is a phosphoserine (Ser-89). A Phosphothreonine modification is found at Thr-119. At Lys-121 the chain carries N6-succinyllysine. A Phosphoserine modification is found at Ser-132. Residue Glu-188 is the Proton acceptor of the active site. Lys-230 (schiff-base intermediate with dihydroxyacetone-P) is an active-site residue. A phosphoserine mark is found at Ser-272, Ser-276, Ser-299, and Ser-301. 272–274 (SGG) contributes to the beta-D-fructose 1,6-bisphosphate binding site. Position 304 (Arg-304) interacts with beta-D-fructose 1,6-bisphosphate. At Ser-309 the chain carries Phosphoserine. Lys-317 carries the post-translational modification N6-succinyllysine.

This sequence belongs to the class I fructose-bisphosphate aldolase family. In terms of assembly, homotetramer. Interacts with BBS1, BBS2, BBS4 and BBS7. Forms a ternary complex with G6PD and TP53; this interaction is direct.

The protein resides in the cytoplasm. The protein localises to the cytosol. It localises to the cytoskeleton. It is found in the microtubule organizing center. Its subcellular location is the centrosome. The protein resides in the centriolar satellite. It catalyses the reaction beta-D-fructose 1,6-bisphosphate = D-glyceraldehyde 3-phosphate + dihydroxyacetone phosphate. It carries out the reaction beta-D-fructose 1-phosphate = D-glyceraldehyde + dihydroxyacetone phosphate. It participates in carbohydrate degradation; glycolysis; D-glyceraldehyde 3-phosphate and glycerone phosphate from D-glucose: step 4/4. It functions in the pathway carbohydrate biosynthesis; gluconeogenesis. Its pathway is carbohydrate metabolism; fructose metabolism. Catalyzes the aldol cleavage of fructose 1,6-biphosphate to form two triosephosphates dihydroxyacetone phosphate and D-glyceraldehyde 3-phosphate in glycolysis as well as the reverse stereospecific aldol addition reaction in gluconeogenesis. In fructolysis, metabolizes fructose 1-phosphate derived from the phosphorylation of dietary fructose by fructokinase into dihydroxyacetone phosphate and D-glyceraldehyde. Acts as an adapter independently of its enzymatic activity, exerts a tumor suppressor role by stabilizing the ternary complex with G6PD and TP53 to inhibit G6PD activity and keep oxidative pentose phosphate metabolism in check. The protein is Fructose-bisphosphate aldolase B (Aldob) of Rattus norvegicus (Rat).